Here is a 363-residue protein sequence, read N- to C-terminus: 3-isopropylmalate dehydrogenase (363 aa).

79–92 serves as a coordination point for NAD(+); sequence GPKWEHLPPNDQPE. 4 residues coordinate substrate: Arg-100, Arg-110, Arg-139, and Asp-228. Mg(2+) is bound by residues Asp-228, Asp-252, and Asp-256. Residue 286–298 coordinates NAD(+); sequence GSAPDIAGKNIAN.

It belongs to the isocitrate and isopropylmalate dehydrogenases family. LeuB type 1 subfamily. As to quaternary structure, homodimer. Requires Mg(2+) as cofactor. Mn(2+) serves as cofactor.

It localises to the cytoplasm. It carries out the reaction (2R,3S)-3-isopropylmalate + NAD(+) = 4-methyl-2-oxopentanoate + CO2 + NADH. Its pathway is amino-acid biosynthesis; L-leucine biosynthesis; L-leucine from 3-methyl-2-oxobutanoate: step 3/4. Catalyzes the oxidation of 3-carboxy-2-hydroxy-4-methylpentanoate (3-isopropylmalate) to 3-carboxy-4-methyl-2-oxopentanoate. The product decarboxylates to 4-methyl-2 oxopentanoate. This is 3-isopropylmalate dehydrogenase from Vibrio vulnificus (strain YJ016).